The chain runs to 556 residues: Formate--tetrahydrofolate ligase (556 aa).

65–72 is an ATP binding site; the sequence is TPAGEGKS.

Belongs to the formate--tetrahydrofolate ligase family.

The catalysed reaction is (6S)-5,6,7,8-tetrahydrofolate + formate + ATP = (6R)-10-formyltetrahydrofolate + ADP + phosphate. It participates in one-carbon metabolism; tetrahydrofolate interconversion. The sequence is that of Formate--tetrahydrofolate ligase from Clostridium acetobutylicum (strain ATCC 824 / DSM 792 / JCM 1419 / IAM 19013 / LMG 5710 / NBRC 13948 / NRRL B-527 / VKM B-1787 / 2291 / W).